Consider the following 410-residue polypeptide: MNPQLNKLTLPIYMDYQATTPIDPRVMEAMLPYFTTKFGNPHSRSHSFGWEAENAVEEARSMVAKLIGADTKEIIFTSGATESNNLAIKGIAKFYSNKKNHIITVVSEHKCVLDACRHLEQEGIKITYLPIKPNGIIDLETLKNAITDQTMLVSVMVVNNEIGVVQPLKEIGKICREKGVFFHSDIAQGFGKIPIDVNEFNIDLASISGHKIYGPKGIGALYVRKKPRVRVTPLINGGGQERGMRSGTLPTPLIVGLGMAAEIAYSEMEKDTKHVNYLFDRFLNNIHKRISEVYLNGDKNQRYKGNVNLSFAGVEGESIILAIKDLAVSSGSACTSASLEPSYVLRSMGIGEELAHTAIRFGIGRFTTEQEVDYAVNLICSKIDKLRELSPLWEMMQEGIDLKKIKWAVH.

Residues 80–81, Asn160, Gln188, and 208–210 each bind pyridoxal 5'-phosphate; these read AT and SGH. Residue Lys211 is modified to N6-(pyridoxal phosphate)lysine. Residue Thr248 coordinates pyridoxal 5'-phosphate. The Cysteine persulfide intermediate role is filled by Cys334. Residue Cys334 participates in [2Fe-2S] cluster binding.

Belongs to the class-V pyridoxal-phosphate-dependent aminotransferase family. NifS/IscS subfamily. In terms of assembly, homodimer. Forms a heterotetramer with IscU, interacts with other sulfur acceptors. Pyridoxal 5'-phosphate is required as a cofactor.

The protein localises to the cytoplasm. It catalyses the reaction (sulfur carrier)-H + L-cysteine = (sulfur carrier)-SH + L-alanine. It participates in cofactor biosynthesis; iron-sulfur cluster biosynthesis. Functionally, master enzyme that delivers sulfur to a number of partners involved in Fe-S cluster assembly, tRNA modification or cofactor biosynthesis. Catalyzes the removal of elemental sulfur atoms from cysteine to produce alanine. Functions as a sulfur delivery protein for Fe-S cluster synthesis onto IscU, an Fe-S scaffold assembly protein, as well as other S acceptor proteins. This Rickettsia massiliae (strain Mtu5) protein is Cysteine desulfurase IscS.